Here is a 623-residue protein sequence, read N- to C-terminus: MKLSSFGLFLALQLLPALGLPSRIDEVDVSDPELIGLLKPDNVDKPANSIPLSKRSTSPSYAPYTVACPSGSLLRPASDGLSTGEQEFVDKRVSKVNSALESFISKTGLKIDTKSVLNDTDGPRLGIAISGGGFPAMLTGAGAINAFDARNGNTTSLGGILQSSMYLTGLSGGSWLVGSVAVNNFANITFLHDDVWNLDHSLFAPYDDAFENFYIYQEWFEQVLQKKNAGFNVSITDLWGRALALKLVNPLTGGANTTFSSVTNETWFQDGEFPFPIIIADNVIEGETVIPLNDTVFEFTPIEFGTWDTGVESFIPMEYTGTHLINGIPLNESCVRNFDNAGFLMGTSSNVFSGILPATNASLTASNNTFNNAVLSFLEMLAEDQLDVGLYPNPYQGYGNASNTTTTNPLEPYPIIELIDGGSDSEGIPFWPLLHPQRDVDVIFAIDGGYQSATSGWPDGSSLVSTYERVLATNSSGVRGFPYIPDTNTFLALGLNTHPTFFGCDGRNTTAGNHTVNDDTPPLVVYFPNYPWTMYANVTTYTVQLEDTLSSGMIENAAVAATQNNSDSFAVCVACALVQRSLERKNMSTPSQCASCFNQYCWNGTIASTTVTTYAPTVLSAKI.

The first 19 residues, 1 to 19 (MKLSSFGLFLALQLLPALG), serve as a signal peptide directing secretion. The PLA2c domain maps to 67-607 (ACPSGSLLRP…NQYCWNGTIA (541 aa)). N-linked (GlcNAc...) asparagine glycosylation is found at N118, N153, N187, N232, N256, N264, N293, N331, N360, N367, N400, N403, N474, N508, N513, N537, N564, N586, and N603.

Belongs to the lysophospholipase family.

The protein localises to the secreted. The catalysed reaction is a 1-acyl-sn-glycero-3-phosphocholine + H2O = sn-glycerol 3-phosphocholine + a fatty acid + H(+). In terms of biological role, catalyzes the release of fatty acids from lysophospholipids. This chain is Probable lysophospholipase 5 (plb5), found in Schizosaccharomyces pombe (strain 972 / ATCC 24843) (Fission yeast).